Consider the following 404-residue polypeptide: Chorismate synthase (404 aa).

2 residues coordinate NADP(+): Arg-40 and Arg-46. Residues 136 to 138, 257 to 258, Gly-301, 316 to 320, and Arg-342 contribute to the FMN site; these read RAS, QA, and KPIST.

It belongs to the chorismate synthase family. Homotetramer. FMNH2 is required as a cofactor.

The enzyme catalyses 5-O-(1-carboxyvinyl)-3-phosphoshikimate = chorismate + phosphate. It participates in metabolic intermediate biosynthesis; chorismate biosynthesis; chorismate from D-erythrose 4-phosphate and phosphoenolpyruvate: step 7/7. Functionally, catalyzes the anti-1,4-elimination of the C-3 phosphate and the C-6 proR hydrogen from 5-enolpyruvylshikimate-3-phosphate (EPSP) to yield chorismate, which is the branch point compound that serves as the starting substrate for the three terminal pathways of aromatic amino acid biosynthesis. This reaction introduces a second double bond into the aromatic ring system. The chain is Chorismate synthase from Mycolicibacterium vanbaalenii (strain DSM 7251 / JCM 13017 / BCRC 16820 / KCTC 9966 / NRRL B-24157 / PYR-1) (Mycobacterium vanbaalenii).